Here is an 803-residue protein sequence, read N- to C-terminus: Rho guanine nucleotide exchange factor 7 (803 aa).

Methionine 1 bears the N-acetylmethionine mark. Residues 1-133 (MNSAEQTVTW…SLVTLNKVTA (133 aa)) enclose the Calponin-homology (CH) domain. Residue asparagine 2 is modified to N-acetylthreonine. A phosphoserine mark is found at serine 153 and serine 176. The 60-residue stretch at 184–243 (NNQLVVRAKFNFQQTNEDELSFSKGDVIHVTRVEEGGWWEGTLNGRTGWFPSNYVREVKA) folds into the SH3 domain. Phosphoserine occurs at positions 249 and 257. The DH domain occupies 271 to 451 (YYNVVLQNIL…KNLSAQCQEV (181 aa)). The PH domain maps to 473-578 (DIKTLGNVTY…WVEHLQKQTK (106 aa)). Phosphoserine occurs at positions 518, 560, and 579. The tract at residues 580-655 (TSVGNPTIKP…TPKPWSLSCL (76 aa)) is disordered. Over residues 593–606 (PSHTLPSHPVTPSS) the composition is skewed to polar residues. Phosphoserine occurs at positions 645 and 664. The segment covering 678–690 (KTMKKLLPKRKPE) has biased composition (basic residues). Disordered regions lie at residues 678 to 704 (KTMKKLLPKRKPERKPSDEEFASRKST) and 748 to 773 (DDQPSLDSLGRRSSLSRLEPSDLSED). Residues 691-700 (RKPSDEEFAS) show a composition bias toward basic and acidic residues. Position 694 is a phosphoserine; by CaMK1 (serine 694). The segment covering 752–765 (SLDSLGRRSSLSRL) has biased composition (low complexity).

As to quaternary structure, interacts with PAK kinases through the SH3 domain. Interacts with GIT1 and TGFB1I1. Interacts with PTK2/FAK1 and RAC1. Interacts with ITCH and PARVB. Interacts with unphosphorylated PAK1. Interacts with SCRIB; interaction is direct and may play a role in regulation of apoptosis. Interacts with FRMPD4 (via N-terminus). Interacts with CaMK1. Interacts with BIN2. Interacts with YWHAZ. Interacts (via PH domain) with NOX1 (via FAD-binding FR-type domain). In terms of assembly, interacts with SNX27. Phosphorylated by PTK2/FAK1; this promotes interaction with RAC1. Phosphorylated on Ser-694 by CaMK1; enhancement of GEF activity and downstream activation of RAC1.

The protein localises to the cell junction. The protein resides in the focal adhesion. It localises to the cell projection. It is found in the ruffle. Its subcellular location is the cytoplasm. The protein localises to the cell cortex. The protein resides in the lamellipodium. In terms of biological role, acts as a RAC1 guanine nucleotide exchange factor (GEF) and can induce membrane ruffling. Functions in cell migration, attachment and cell spreading. Promotes targeting of RAC1 to focal adhesions. May function as a positive regulator of apoptosis. Downstream of NMDA receptors and CaMKK-CaMK1 signaling cascade, promotes the formation of spines and synapses in hippocampal neurons. The chain is Rho guanine nucleotide exchange factor 7 (ARHGEF7) from Homo sapiens (Human).